The chain runs to 459 residues: MNFPRALAGFSSWLFKPELAEDSPDNDSPDNDTVNPWRELLQKINVADLPDSSFSSGKELNDSVYHTFEHFCKIRDYDAVGELLLAFLDKVTKERDQFRDEISQLRMHINDLKASKCVLGETLLSYRHRIEVGEKQTEALIVRLADVQSQVMCQPARKVSADKVRALIGKEWDPVTWDGDVWEDIDSEGSEEAELPTVLASPSLSEESGYALSKERTQQDKADAPQIQSSTSLVTSEPVTRPKSLSDLTSQKHRHTNHELNSLAHSNRQKAKEHARKWILRVWDNGGRLTILDQIEFLSLGPLSLDSEFNVIARTVEDNGVKSLFDWLAEAWVQRWPTTRELQSPDTLEWYSIEDGIERLRELGMIEWLCVKATCPQWRGPEDVPITRAMRITFVRETRETWKSFVFSLLCIKDITVGSVAAQLHDLIELSLKPTAAGLTSVGSVGVLSLSPWKHQSNS.

The interval 192–269 is disordered; sequence EAELPTVLAS…LNSLAHSNRQ (78 aa). The segment covering 213 to 223 has biased composition (basic and acidic residues); that stretch reads SKERTQQDKAD. Polar residues predominate over residues 226 to 238; it reads QIQSSTSLVTSEP.

Functionally, retroviral restriction factor that prevents infection by gammaretroviruses. Acts by interacting with the capsid protein ca after entry of the virus into the cell. This interaction presumably disrupt the capsid thereby inactivating the viral genome, making it unable to enter host nucleus and integrate into host genome. This is Friend virus susceptibility protein 1 (Fv1) from Mus musculus (Mouse).